Here is a 449-residue protein sequence, read N- to C-terminus: Xylose isomerase (449 aa).

Residues His-101 and Asp-104 contribute to the active site. Mg(2+) is bound by residues Glu-232, Glu-268, His-271, Asp-296, Asp-307, Asp-309, and Asp-340.

It belongs to the xylose isomerase family. As to quaternary structure, homotetramer. The cofactor is Mg(2+).

It localises to the cytoplasm. The catalysed reaction is alpha-D-xylose = alpha-D-xylulofuranose. This Bifidobacterium longum (strain NCC 2705) protein is Xylose isomerase.